Here is a 181-residue protein sequence, read N- to C-terminus: Inner membrane-spanning protein YciB (181 aa).

The next 5 membrane-spanning stretches (helical) occupy residues 10–30 (LIIF…GALI), 50–70 (MQLI…ALHD), 80–100 (IVYV…KPAI), 120–140 (WAWV…AYHL), and 148–168 (FKVF…GGYI).

Belongs to the YciB family.

It is found in the cell inner membrane. Functionally, plays a role in cell envelope biogenesis, maintenance of cell envelope integrity and membrane homeostasis. The polypeptide is Inner membrane-spanning protein YciB (Vibrio cholerae serotype O1 (strain ATCC 39541 / Classical Ogawa 395 / O395)).